A 222-amino-acid polypeptide reads, in one-letter code: Probable mitochondrial import inner membrane translocase subunit Tim17 3 (222 aa).

Helical transmembrane passes span 16-36 (CGCA…LKGF), 60-80 (SIAG…CALV), and 115-135 (ALVG…VATI).

Belongs to the Tim17/Tim22/Tim23 family. Component of the TIM23 complex at least composed of Tim23, Tim17 (Tim17a1, Tim17a2 or Tim17b1) and a Tim50. The complex interacts with the Tim44 component of the PAM complex.

It localises to the mitochondrion inner membrane. Functionally, essential component of the TIM23 complex, a complex that mediates the translocation of transit peptide-containing proteins across the mitochondrial inner membrane. The chain is Probable mitochondrial import inner membrane translocase subunit Tim17 3 (Tim17a1) from Drosophila melanogaster (Fruit fly).